Consider the following 142-residue polypeptide: Large ribosomal subunit protein uL13 (142 aa).

This sequence belongs to the universal ribosomal protein uL13 family. As to quaternary structure, part of the 50S ribosomal subunit.

In terms of biological role, this protein is one of the early assembly proteins of the 50S ribosomal subunit, although it is not seen to bind rRNA by itself. It is important during the early stages of 50S assembly. The chain is Large ribosomal subunit protein uL13 from Haemophilus influenzae (strain PittGG).